A 138-amino-acid chain; its full sequence is ATP synthase epsilon chain (138 aa).

Belongs to the ATPase epsilon chain family. In terms of assembly, F-type ATPases have 2 components, CF(1) - the catalytic core - and CF(0) - the membrane proton channel. CF(1) has five subunits: alpha(3), beta(3), gamma(1), delta(1), epsilon(1). CF(0) has three main subunits: a, b and c.

It localises to the cell inner membrane. Functionally, produces ATP from ADP in the presence of a proton gradient across the membrane. The chain is ATP synthase epsilon chain from Acidovorax ebreus (strain TPSY) (Diaphorobacter sp. (strain TPSY)).